A 220-amino-acid chain; its full sequence is Vesicle-associated membrane protein 7 (220 aa).

The residue at position 2 (Ala2) is an N-acetylalanine; partial. The Cytoplasmic portion of the chain corresponds to 2–188 (AILFAVVARG…ARAMCMKNLK (187 aa)). The region spanning 7–110 (VVARGTTILA…AMNSEFSSVL (104 aa)) is the Longin domain. The v-SNARE coiled-coil homology domain occupies 125 to 185 (KVMETQAQVD…RNLARAMCMK (61 aa)). Phosphoserine is present on residues Ser167 and Ser168. Residues 189–209 (LTIIIIIVSIVFIYIIVSPLC) traverse the membrane as a helical; Anchor for type IV membrane protein segment. Over 210-220 (GGFTWPSCVKK) the chain is Vesicular.

The protein belongs to the synaptobrevin family. Component of the SNARE complex composed of STX4, SNAP23 and VAMP7 that binds SYT7 during lysosomal exocytosis. Component of the SNARE complex composed of STX7, STX8, VAMP7 and VTI1B that is required for heterotypic fusion of late endosomes with lysosomes. May interact with STX17. Interacts with PICALM. Interacts with RAB21. As to expression, detected in all tissues tested.

The protein resides in the cytoplasmic vesicle. It localises to the secretory vesicle membrane. The protein localises to the golgi apparatus. Its subcellular location is the trans-Golgi network membrane. It is found in the late endosome membrane. The protein resides in the lysosome membrane. It localises to the endoplasmic reticulum membrane. The protein localises to the phagosome membrane. Its subcellular location is the synapse. It is found in the synaptosome. In terms of biological role, involved in the targeting and/or fusion of transport vesicles to their target membrane during transport of proteins from the early endosome to the lysosome. Required for heterotypic fusion of late endosomes with lysosomes and homotypic lysosomal fusion. Required for calcium regulated lysosomal exocytosis. Involved in the export of chylomicrons from the endoplasmic reticulum to the cis Golgi. Required for exocytosis of mediators during eosinophil and neutrophil degranulation, and target cell killing by natural killer cells. Required for focal exocytosis of late endocytic vesicles during phagosome formation. The sequence is that of Vesicle-associated membrane protein 7 (VAMP7) from Homo sapiens (Human).